Consider the following 277-residue polypeptide: MAALGRPFSGLPLSGSADFLQPPPAFAGRAFPPGAAGHDLAPRPGVRGAPSSPGGRTARGRVSIHCRKKHKRLAEDDECPVRKKRLTEAELGAVTDEWALGAHQGREGHGVNTCPSSLSMPSMLDVVCEEMDQTTGEPQCEVARRRLQEIEDRIIDEDEEVESDRNVSHLPSLVLSDTMKTGLKREFDEVFTKRMIESMSRPSMELVLWKPLPELLPEKPKPSSSPKNYRRESQAKHAAPGTAFPQRTEGLLEPQCADAPLYRSLEAATSTEEEMEL.

Residues 1-69 (MAALGRPFSG…GRVSIHCRKK (69 aa)) are disordered. Residues 26–37 (FAGRAFPPGAAG) show a composition bias toward low complexity. The residue at position 47 (Arg47) is an Omega-N-methylarginine. At Ser52 the chain carries Phosphoserine. Basic residues predominate over residues 58–69 (ARGRVSIHCRKK). Residues 139–166 (QCEVARRRLQEIEDRIIDEDEEVESDRN) are a coiled coil. The segment at 212 to 277 (LPELLPEKPK…ATSTEEEMEL (66 aa)) is disordered.

Interacts with CIAO2B; the interaction is direct. Interacts with MMS19; the interaction is indirect.

It localises to the cytoplasm. The protein localises to the cytoskeleton. Its subcellular location is the spindle. It is found in the nucleus. Facilitates DNA repair, cell cycle progression, and cell proliferation through its interaction with CIAO2B. The sequence is that of Coiled-coil domain-containing protein 117 from Mus musculus (Mouse).